A 253-amino-acid polypeptide reads, in one-letter code: 5'-nucleotidase SurE (253 aa).

Residues Asp-8, Asp-9, Ser-40, and Asn-92 each contribute to the a divalent metal cation site.

The protein belongs to the SurE nucleotidase family. It depends on a divalent metal cation as a cofactor.

It localises to the cytoplasm. The enzyme catalyses a ribonucleoside 5'-phosphate + H2O = a ribonucleoside + phosphate. Nucleotidase that shows phosphatase activity on nucleoside 5'-monophosphates. This is 5'-nucleotidase SurE from Hyphomonas neptunium (strain ATCC 15444).